The following is a 649-amino-acid chain: MASNMDREMILADFQACTGIENIDEAITLLEQNNWDLVAAINGVIPQENGILQSDFGGETMPGPTFDPASHPAPASTPSSSAFRPVMPSRQIVERQPRMLDFRVEYRDRNVDVVLEDSCTVGEIKQILENELQIPVPKMLLKGWKTGDVEDSTVLKSLHLPKNNSLYVLTPDLPPPSSSSHAGALQESLNQNFMLIITHREVQREYNLNFSGSSTVQEVKRNVYDLTSIPVRHQLWEGWPASATDDSMCLAESGLSYPCHRLTVGRRTSPVQTREQSEEQSTDVHMVSDSDGDDFEDASEFGVDDGEVFGMASSTLRKSPMMPENAENEGDALLQFTAEFSSRYGDCHPVFFIGSLEAAFQEAFYVKARDRKLLAIYLHHDESVLTNVFCSQMLCAESIVSYLSQNFITWAWDLTKDTNRARFLTMCNRHFGSVIAQTIRTQKTDQFPLFLIIMGKRSSNEVLNVIQGNTTVDELMMRLMAAMEIFSAQQQEDIKDEDEREARENVKREQDEAYRLSLEADRAKREAHEREMAEQFRLEQIRKEQEEEREAIRLSLEQALPPEPKEENAEPVSKLRIRTPSGEFLERRFLASNKLQIVFDFVASKGFPWDEFKLLSTFPRRDVTQLDPNKSLLEVNLFPQETLFLQAKE.

The 57-residue stretch at Met1–Gly57 folds into the UBA domain. Disordered regions lie at residues Phe56 to Arg84 and Arg266 to Ser290. Residues Pro68–Ala82 are compositionally biased toward low complexity. Residue Ser319 is modified to Phosphoserine. One can recognise a UBX domain in the interval Asn568–Leu645. Thr579 bears the Phosphothreonine mark. Residue Ser581 is modified to Phosphoserine.

Interacts with CDT1 and ATPase VCP/p97. Interacts (via UBA domain) with FAS (via death domain). Interacts (via UBA domain) with NLRP12 (via DAPIN/PYRIN domain).

Its subcellular location is the nucleus. Functionally, ubiquitin-binding protein. Required for the progression of DNA replication forks by targeting DNA replication licensing factor CDT1 for degradation. Potentiates but cannot initiate FAS-induced apoptosis. The sequence is that of FAS-associated factor 1 (Faf1) from Mus musculus (Mouse).